The primary structure comprises 204 residues: MEQSMSSEQAERVAGRVEQLGGFQNNESINQRALLLLQRNRQRRQLLQRQEDRTRYIPDDAKRRVVERVAEPAAAESRADGAREEERAARPARPRETRRIAKKPQRYRPSDVALQEIRRYQRSTELLISRMPFARLVKEVTDQFTTVDQQMRWQSMAILALQEASEAYIVGLLEHTNLLALHAKRVTVMRKDMQLARRIRGQFI.

A disordered region spans residues 68–107; that stretch reads RVAEPAAAESRADGAREEERAARPARPRETRRIAKKPQRY. Residues 77-99 show a composition bias toward basic and acidic residues; it reads SRADGAREEERAARPARPRETRR. The H3-like stretch occupies residues 89–202; it reads ARPARPRETR…MQLARRIRGQ (114 aa).

The protein belongs to the histone H3 family. Component of centromeric nucleosomes, where DNA is wrapped around a histone octamer core. The octamer contains two molecules each of H2A, H2B, CSE4/CENPA and H4 assembled in one CSE4-H4 heterotetramer and two H2A-H2B heterodimers. Interacts with the inner kinetochore. Ubiquitinated. Is degraded through ubiquitin-mediated proteolysis when not protected by its association to the kinetochore.

It localises to the nucleus. Its subcellular location is the chromosome. The protein localises to the centromere. In terms of biological role, histone H3-like nucleosomal protein that is specifically found in centromeric nucleosomes. Replaces conventional H3 in the nucleosome core of centromeric chromatin that serves as an assembly site for the inner kinetochore. Required for recruitment and assembly of kinetochore proteins, mitotic progression and chromosome segregation. May serve as an epigenetic mark that propagates centromere identity through replication and cell division. This chain is Histone H3-like centromeric protein CSE4 (CSE4), found in Eremothecium gossypii (strain ATCC 10895 / CBS 109.51 / FGSC 9923 / NRRL Y-1056) (Yeast).